Consider the following 231-residue polypeptide: L-ribulose-5-phosphate 4-epimerase SgbE (231 aa).

Residues 27–28, 44–45, and 74–75 contribute to the substrate site; these read GN, SG, and SS. Zn(2+)-binding residues include D76, H95, and H97. Residue D120 is the Proton donor/acceptor of the active site. H171 contributes to the Zn(2+) binding site. The active-site Proton donor/acceptor is the Y229.

Belongs to the aldolase class II family. AraD/FucA subfamily. The cofactor is Zn(2+).

The enzyme catalyses L-ribulose 5-phosphate = D-xylulose 5-phosphate. Functionally, catalyzes the interconversion of L-ribulose 5-phosphate (LRu5P) and D-xylulose 5-phosphate (D-Xu5P) via a retroaldol/aldol mechanism (carbon-carbon bond cleavage analogous to a class II aldolase reaction). May be involved in the utilization of 2,3-diketo-L-gulonate. This chain is L-ribulose-5-phosphate 4-epimerase SgbE, found in Escherichia coli (strain K12).